The chain runs to 344 residues: MIVLGIESSCDETGVGVVDLDEQGNLTILADAVASSMQDHARFGGVVPEIASRAHLESMVPVMREALHRAGIDKPDAVAATVGPGLAGALLVGASAAKAYAAAWDVPFYAVNHLGGHVAVANLDGEPLPHSVALLVSGGHTQLLEVEAVGLPMKELGSTLDDAAGEAYDKVSRLLGLGYPGGPVIDKLARRGDPQAIAFPRGLMKKSDSRHDFSFSGLKTAVARYVEAAERAGEVISVEDVCASFQEAVCDVLTFKAVRACQDVGAKVLLLGGGVAANSRLRELAQERCDAAGIELRVPSFKLCTDNGVMIAALAAQRIHEGAGGSALTVGTDPSLAVETPQVF.

His113 and His117 together coordinate Fe cation. Substrate contacts are provided by residues 135–139 (LVSGG), Asp169, Gly182, Asp186, and Asn278. Residue Asp306 coordinates Fe cation.

This sequence belongs to the KAE1 / TsaD family. It depends on Fe(2+) as a cofactor.

The protein resides in the cytoplasm. The enzyme catalyses L-threonylcarbamoyladenylate + adenosine(37) in tRNA = N(6)-L-threonylcarbamoyladenosine(37) in tRNA + AMP + H(+). Required for the formation of a threonylcarbamoyl group on adenosine at position 37 (t(6)A37) in tRNAs that read codons beginning with adenine. Is involved in the transfer of the threonylcarbamoyl moiety of threonylcarbamoyl-AMP (TC-AMP) to the N6 group of A37, together with TsaE and TsaB. TsaD likely plays a direct catalytic role in this reaction. The chain is tRNA N6-adenosine threonylcarbamoyltransferase from Corynebacterium efficiens (strain DSM 44549 / YS-314 / AJ 12310 / JCM 11189 / NBRC 100395).